The sequence spans 363 residues: Spermidine/putrescine import ATP-binding protein PotA 2 (363 aa).

The ABC transporter domain occupies 6–236 (LEIRNVTRRF…PRSRFVADFI (231 aa)). 38-45 (GPSGCGKT) lines the ATP pocket.

This sequence belongs to the ABC transporter superfamily. Spermidine/putrescine importer (TC 3.A.1.11.1) family. The complex is composed of two ATP-binding proteins (PotA), two transmembrane proteins (PotB and PotC) and a solute-binding protein (PotD).

It is found in the cell inner membrane. The enzyme catalyses ATP + H2O + polyamine-[polyamine-binding protein]Side 1 = ADP + phosphate + polyamineSide 2 + [polyamine-binding protein]Side 1.. In terms of biological role, part of the ABC transporter complex PotABCD involved in spermidine/putrescine import. Responsible for energy coupling to the transport system. The protein is Spermidine/putrescine import ATP-binding protein PotA 2 of Pseudomonas aeruginosa (strain ATCC 15692 / DSM 22644 / CIP 104116 / JCM 14847 / LMG 12228 / 1C / PRS 101 / PAO1).